A 287-amino-acid polypeptide reads, in one-letter code: U1 small nuclear ribonucleoprotein A (287 aa).

In terms of domain architecture, RRM 1 spans 16 to 95 (HTIYINNLNE…KPMRIQYAKT (80 aa)). Position 66 is an N6-acetyllysine (Lys-66). The tract at residues 106-134 (TYVERDRKREKRKPKSQETPAAKKAVQGG) is disordered. The span at 125–134 (PAAKKAVQGG) shows a compositional bias: low complexity. Arg-157 is modified (omega-N-methylarginine). The RRM 2 domain maps to 213–287 (HILFLTNLPE…NAMKISFAKK (75 aa)).

It belongs to the RRM U1 A/B'' family. U1 snRNP is composed of the 7 core Sm proteins SNRPB, SNRPD1, SNRPD2, SNRPD3, SNRPE, SNRPF and SNRPG that assemble in a heptameric protein ring on the Sm site of the small nuclear RNA to form the core snRNP, and at least three U1 snRNP-specific proteins SNRNP70/U1-70K, SNRPA/U1-A and SNRPC/U1-C. Interacts with SFPQ; component of a snRNP-free complex with SFPQ. Interacts with IVNS1ABP (via BACK domain); the interaction is indirect.

It localises to the nucleus. Component of the spliceosomal U1 snRNP, which is essential for recognition of the pre-mRNA 5' splice-site and the subsequent assembly of the spliceosome. U1 snRNP is the first snRNP to interact with pre-mRNA. This interaction is required for the subsequent binding of U2 snRNP and the U4/U6/U5 tri-snRNP. SNRPA binds stem loop II of U1 snRNA. In a snRNP-free form (SF-A) may be involved in coupled pre-mRNA splicing and polyadenylation process. May bind preferentially to the 5'-UGCAC-3' motif on RNAs. The chain is U1 small nuclear ribonucleoprotein A (Snrpa) from Mus musculus (Mouse).